The chain runs to 414 residues: Putative competence-damage inducible protein (414 aa).

The protein belongs to the CinA family.

In Geobacillus kaustophilus (strain HTA426), this protein is Putative competence-damage inducible protein.